A 411-amino-acid chain; its full sequence is Squalene synthase (411 aa).

The NADP(+) site is built by R49 and R74. Mg(2+) is bound by residues D77, E80, and D81. 3 residues coordinate NADP(+): R212, K312, and R314. Residues 388 to 408 (SPVLIVVIFIILAIILAQLFG) traverse the membrane as a helical segment.

The protein belongs to the phytoene/squalene synthase family. It depends on Mg(2+) as a cofactor.

The protein resides in the membrane. It catalyses the reaction 2 (2E,6E)-farnesyl diphosphate + NADH + H(+) = squalene + 2 diphosphate + NAD(+). The catalysed reaction is 2 (2E,6E)-farnesyl diphosphate + NADPH + H(+) = squalene + 2 diphosphate + NADP(+). Functionally, converts farnesyl diphosphate (FPP) into squalene, a precursor for sterol biosynthesis in eukaryotes. This is Squalene synthase from Solanum lycopersicum (Tomato).